Reading from the N-terminus, the 48-residue chain is Sperm protamine P1 (48 aa).

The protein belongs to the protamine P1 family. In terms of tissue distribution, testis.

It is found in the nucleus. It localises to the chromosome. Its function is as follows. Protamines substitute for histones in the chromatin of sperm during the haploid phase of spermatogenesis. They compact sperm DNA into a highly condensed, stable and inactive complex. The protein is Sperm protamine P1 (PRM1) of Eptesicus fuscus (Big brown bat).